The following is a 252-amino-acid chain: 2-succinyl-6-hydroxy-2,4-cyclohexadiene-1-carboxylate synthase (252 aa).

The protein belongs to the AB hydrolase superfamily. MenH family. As to quaternary structure, monomer.

It catalyses the reaction 5-enolpyruvoyl-6-hydroxy-2-succinyl-cyclohex-3-ene-1-carboxylate = (1R,6R)-6-hydroxy-2-succinyl-cyclohexa-2,4-diene-1-carboxylate + pyruvate. It participates in quinol/quinone metabolism; 1,4-dihydroxy-2-naphthoate biosynthesis; 1,4-dihydroxy-2-naphthoate from chorismate: step 3/7. It functions in the pathway quinol/quinone metabolism; menaquinone biosynthesis. Catalyzes a proton abstraction reaction that results in 2,5-elimination of pyruvate from 2-succinyl-5-enolpyruvyl-6-hydroxy-3-cyclohexene-1-carboxylate (SEPHCHC) and the formation of 2-succinyl-6-hydroxy-2,4-cyclohexadiene-1-carboxylate (SHCHC). This Escherichia coli (strain UTI89 / UPEC) protein is 2-succinyl-6-hydroxy-2,4-cyclohexadiene-1-carboxylate synthase.